Reading from the N-terminus, the 1242-residue chain is DNA mismatch repair protein MSH6 (1242 aa).

The segment covering 1-11 (MAPATPKTSKT) has biased composition (polar residues). The tract at residues 1–271 (MAPATPKTSK…ATSKSSKFNK (271 aa)) is disordered. The segment covering 18–37 (STSSQKKMKQSSLLSFFSKQ) has biased composition (low complexity). A PIP box motif is present at residues 27–34 (QSSLLSFF). Positions 54-69 (TLENTATDKITKNPQG) are enriched in polar residues. Phosphoserine is present on Ser102. The span at 103 to 121 (QEPQSDTMLNSNTTEPKST) shows a compositional bias: polar residues. Residues Ser145 and Ser150 each carry the phosphoserine modification. 2 stretches are compositionally biased toward acidic residues: residues 166–190 (SESD…ADDK) and 198–207 (AEDSGDDDDL). Ser201 is modified (phosphoserine). Composition is skewed to polar residues over residues 220 to 233 (SYNT…FTRN) and 245 to 270 (PNQA…SKFN). The DNA-binding element occupies 228-299 (SPFTRNISRD…PKSDPEYDPR (72 aa)). Residues 305–421 (SSAWNKFTPF…RELQCILTSG (117 aa)) form a mispair-binding domain region. Phosphothreonine is present on Thr451. 982–989 (GANAAGKS) provides a ligand contact to ATP.

This sequence belongs to the DNA mismatch repair MutS family. Heterodimer consisting of MSH2-MSH6 (MutS alpha). Forms a ternary complex with MutL alpha (MLH1-PMS1). MutS alpha interacts with proliferating cell nuclear antigen (PCNA/POL30). This interaction is disrupted upon binding of MutS alpha to mismatch DNA.

The protein resides in the nucleus. Inhibited by Cd(2+). Component of the post-replicative DNA mismatch repair system (MMR). Heterodimerizes with MSH2 to form MutS alpha, which binds to DNA mismatches thereby initiating DNA repair. MSH6 provides substrate-binding and substrate specificity to the complex. When bound, MutS alpha bends the DNA helix and shields approximately 20 base pairs. Acts mainly to repair base-base and single insertion-deletion mismatches that occur during replication, but can also repair longer insertion-deletion loops (IDLs), although with decreasing efficiency as the size of the extrahelical loop increases. After mismatch binding, forms a ternary complex with the MutL alpha heterodimer, which is thought to be responsible for directing the downstream MMR events, including strand discrimination, excision, and resynthesis. ATP binding and hydrolysis by the MutS alpha complex is crucial for MMR. Both subunits bind ATP, but with differing affinities, and their ATPase kinetics are also very different. MSH6 binds and hydrolyzes ATP rapidly, whereas MSH2 catalyzes ATP at a substantially slower rate. Binding to a mismatched base pair suppresses MSH6-catalyzed ATP hydrolysis, but not the activity of MSH2. ATP binding to both subunits is necessary to trigger a change in MutS alpha interaction with mismatched DNA, converting MutS alpha into a sliding clamp capable of hydrolysis-independent movement along DNA, and also facilitates formation of ternary complexes containing MutS and MutL proteins and the mismatch. May also be involved in resolution of recombination intermediates. This is DNA mismatch repair protein MSH6 (MSH6) from Saccharomyces cerevisiae (strain ATCC 204508 / S288c) (Baker's yeast).